The chain runs to 340 residues: Flavonoid 7-O-methyltransferase 2 (340 aa).

Asp-207 contacts S-adenosyl-L-methionine. His-245 acts as the Proton acceptor in catalysis.

The protein belongs to the class I-like SAM-binding methyltransferase superfamily. Cation-independent O-methyltransferase family. As to quaternary structure, homodimer. As to expression, expressed in leaves.

The enzyme catalyses scutellarein 4'-methyl ether + S-adenosyl-L-methionine = ladanein + S-adenosyl-L-homocysteine. The catalysed reaction is acacetin + S-adenosyl-L-methionine = apigenin 4',7-dimethyl ether + S-adenosyl-L-homocysteine. It carries out the reaction diosmetin + S-adenosyl-L-methionine = luteolin 4',7-dimethyl ether + S-adenosyl-L-homocysteine. It catalyses the reaction chrysoeriol + S-adenosyl-L-methionine = velutin + S-adenosyl-L-homocysteine. The enzyme catalyses (2S)-naringenin + S-adenosyl-L-methionine = (2S)-sakuranetin + S-adenosyl-L-homocysteine + H(+). The catalysed reaction is apigenin + S-adenosyl-L-methionine = genkwanin + S-adenosyl-L-homocysteine + H(+). It carries out the reaction luteolin + S-adenosyl-L-methionine = luteolin 7-methyl ether + S-adenosyl-L-homocysteine + H(+). It catalyses the reaction scutellarein + S-adenosyl-L-methionine = scutellarein 7-methyl ether + S-adenosyl-L-homocysteine. It participates in flavonoid metabolism. Flavonoid 7-O-methyltransferase involved in the biosynthesis of polymethoxylated flavonoids natural products such as nevadensin and salvigenin, aroma compounds which contribute to the flavor of sweet basil, and exhibit pharmacological activities such as anti-allergic, anti-oxidant, antibacterial, anti-proliferative, and anti-inflammatory effects. Catalyzes S-adenosylmethionine-dependent regioselective 7-O-methylation of flavonoids; active on various hydroxylated flavonoid substrates, including apigenin (API) and luteolin (LUT), and, with a lower efficiency, scutellarein (SCU), naringenin (NAR), chrysoeriol (CHRYS), diosmetin (DIOS), acacetin (ACA) and scutellarein-7-methyl ether (SCU7Me). This Ocimum basilicum (Sweet basil) protein is Flavonoid 7-O-methyltransferase 2.